The primary structure comprises 149 residues: MLKLWLICILTVSVVSIQSLSLLEETNYVSDCLASNNISQAEFQELIDRNSSEEDDLENTDRRYKCFIHCLAEKGNLLDTNGYLDVDKIDQIEPVSDELREILYDCKKIYDEEEDHCEYAFKMVTCLTESFEQSDEVTEAGKNTNKLNE.

Residues 1-16 form the signal peptide; sequence MLKLWLICILTVSVVS. Intrachain disulfides connect Cys-32/Cys-70, Cys-66/Cys-117, and Cys-106/Cys-126.

Belongs to the PBP/GOBP family.

In terms of biological role, present in the aqueous fluid surrounding olfactory sensory dendrites and are thought to aid in the capture and transport of hydrophobic odorants into and through this fluid. In Drosophila melanogaster (Fruit fly), this protein is General odorant-binding protein 57c.